We begin with the raw amino-acid sequence, 586 residues long: Adenine deaminase (586 aa).

Belongs to the metallo-dependent hydrolases superfamily. Adenine deaminase family. The cofactor is Mn(2+).

The catalysed reaction is adenine + H2O + H(+) = hypoxanthine + NH4(+). This Bdellovibrio bacteriovorus (strain ATCC 15356 / DSM 50701 / NCIMB 9529 / HD100) protein is Adenine deaminase.